The chain runs to 211 residues: uncharacterized protein (211 aa).

6 helical membrane-spanning segments follow: residues 21-38 (WYVI…ASEI), 53-75 (WGMD…YAAV), 82-104 (TAYL…MGVA), 124-146 (IFYA…AANV), 159-178 (PLLI…YWVY), and 188-210 (AVSF…LMEW).

It is found in the cell membrane. This is an uncharacterized protein from Archaeoglobus fulgidus (strain ATCC 49558 / DSM 4304 / JCM 9628 / NBRC 100126 / VC-16).